The primary structure comprises 444 residues: Glutamyl-tRNA reductase (444 aa).

Substrate is bound by residues 49–52, S117, 122–124, and Q128; these read TCNR and EPQ. C50 functions as the Nucleophile in the catalytic mechanism. Residue 202-207 coordinates NADP(+); that stretch reads GAGETI.

It belongs to the glutamyl-tRNA reductase family. As to quaternary structure, homodimer.

The enzyme catalyses (S)-4-amino-5-oxopentanoate + tRNA(Glu) + NADP(+) = L-glutamyl-tRNA(Glu) + NADPH + H(+). It functions in the pathway porphyrin-containing compound metabolism; protoporphyrin-IX biosynthesis; 5-aminolevulinate from L-glutamyl-tRNA(Glu): step 1/2. Its function is as follows. Catalyzes the NADPH-dependent reduction of glutamyl-tRNA(Glu) to glutamate 1-semialdehyde (GSA). The sequence is that of Glutamyl-tRNA reductase from Mannheimia succiniciproducens (strain KCTC 0769BP / MBEL55E).